Reading from the N-terminus, the 347-residue chain is Ribosomal RNA large subunit methyltransferase M (347 aa).

S-adenosyl-L-methionine contacts are provided by residues serine 184, 217 to 220 (APGG), aspartate 236, aspartate 256, and aspartate 272. The Proton acceptor role is filled by lysine 301.

The protein belongs to the class I-like SAM-binding methyltransferase superfamily. RNA methyltransferase RlmE family. RlmM subfamily. In terms of assembly, monomer.

It is found in the cytoplasm. It carries out the reaction cytidine(2498) in 23S rRNA + S-adenosyl-L-methionine = 2'-O-methylcytidine(2498) in 23S rRNA + S-adenosyl-L-homocysteine + H(+). In terms of biological role, catalyzes the 2'-O-methylation at nucleotide C2498 in 23S rRNA. The chain is Ribosomal RNA large subunit methyltransferase M from Xanthomonas axonopodis pv. citri (strain 306).